A 380-amino-acid polypeptide reads, in one-letter code: Anhydro-N-acetylmuramic acid kinase (380 aa).

17–24 serves as a coordination point for ATP; that stretch reads GTSMDGAD.

It belongs to the anhydro-N-acetylmuramic acid kinase family.

It carries out the reaction 1,6-anhydro-N-acetyl-beta-muramate + ATP + H2O = N-acetyl-D-muramate 6-phosphate + ADP + H(+). It functions in the pathway amino-sugar metabolism; 1,6-anhydro-N-acetylmuramate degradation. It participates in cell wall biogenesis; peptidoglycan recycling. Functionally, catalyzes the specific phosphorylation of 1,6-anhydro-N-acetylmuramic acid (anhMurNAc) with the simultaneous cleavage of the 1,6-anhydro ring, generating MurNAc-6-P. Is required for the utilization of anhMurNAc either imported from the medium or derived from its own cell wall murein, and thus plays a role in cell wall recycling. This Cupriavidus metallidurans (strain ATCC 43123 / DSM 2839 / NBRC 102507 / CH34) (Ralstonia metallidurans) protein is Anhydro-N-acetylmuramic acid kinase.